The following is a 112-amino-acid chain: Protein F-112 (112 aa).

Functionally, essential for virus function. This chain is Protein F-112, found in Saccharolobus solfataricus (Sulfolobus solfataricus).